A 479-amino-acid chain; its full sequence is MAVLGVQLVVTLLTATLMHRLAPHCSFARWLLCNGSLFRYKHPSEEELRALAGKPRPRGRKERWANGLSEEKPLSVPRDAPFQLETCPLTTVDALVLRFFLEYQWFVDFAVYSGGVYLFTEAYYYMLGPAKETNIAVFWCLLTVTFSIKMFLTVTRLYFSAEEGGERSVCLTFAFLFLLLAMLVQVVREETLELGLEPGLASMTQNLEPLLKKQGWDWALPVAKLAIRVGLAVVGSVLGAFLTFPGLRLAQTHRDALTMSEDRPMLQFLLHTSFLSPLFILWLWTKPIARDFLHQPPFGETRFSLLSDSAFDSGRLWLLVVLCLLRLAVTRPHLQAYLCLAKARVEQLRREAGRIEAREIQQRVVRVYCYVTVVSLQYLTPLILTLNCTLLLKTLGGYSWGLGPAPLLSPDPSSASAAPIGSGEDEVQQTAARIAGALGGLLTPLFLRGVLAYLIWWTAACQLLASLFGLYFHQHLAGS.

The first 28 residues, 1–28 (MAVLGVQLVVTLLTATLMHRLAPHCSFA), serve as a signal peptide directing secretion. Topologically, residues 29 to 98 (RWLLCNGSLF…LTTVDALVLR (70 aa)) are extracellular. The N-linked (GlcNAc...) asparagine glycan is linked to N34. Phosphoserine is present on S69. Residues 99-119 (FFLEYQWFVDFAVYSGGVYLF) traverse the membrane as a helical segment. The Cytoplasmic portion of the chain corresponds to 120–134 (TEAYYYMLGPAKETN). Residues 135–155 (IAVFWCLLTVTFSIKMFLTVT) form a helical membrane-spanning segment. Residues 156–166 (RLYFSAEEGGE) are Extracellular-facing. Residues 167-187 (RSVCLTFAFLFLLLAMLVQVV) traverse the membrane as a helical segment. Residues 188-224 (REETLELGLEPGLASMTQNLEPLLKKQGWDWALPVAK) lie on the Cytoplasmic side of the membrane. Residues 225 to 245 (LAIRVGLAVVGSVLGAFLTFP) form a helical membrane-spanning segment. Over 246–263 (GLRLAQTHRDALTMSEDR) the chain is Extracellular. The helical transmembrane segment at 264–284 (PMLQFLLHTSFLSPLFILWLW) threads the bilayer. The Cytoplasmic segment spans residues 285 to 304 (TKPIARDFLHQPPFGETRFS). A helical transmembrane segment spans residues 305-325 (LLSDSAFDSGRLWLLVVLCLL). At 326–370 (RLAVTRPHLQAYLCLAKARVEQLRREAGRIEAREIQQRVVRVYCY) the chain is on the extracellular side. Residues 371-391 (VTVVSLQYLTPLILTLNCTLL) traverse the membrane as a helical segment. Residues 392 to 449 (LKTLGGYSWGLGPAPLLSPDPSSASAAPIGSGEDEVQQTAARIAGALGGLLTPLFLRG) are Cytoplasmic-facing. Residues 450–470 (VLAYLIWWTAACQLLASLFGL) form a helical membrane-spanning segment. Residues 471-479 (YFHQHLAGS) are Extracellular-facing.

It belongs to the TMEM161 family.

It is found in the membrane. May play a role in protection against oxidative stress. Overexpression leads to reduced levels of oxidant-induced DNA damage and apoptosis. This chain is Transmembrane protein 161A (TMEM161A), found in Homo sapiens (Human).